Here is a 297-residue protein sequence, read N- to C-terminus: Mitochondrial ornithine transporter 1 (297 aa).

3 Solcar repeats span residues 15–97 (GSPA…LKLT), 102–205 (DPTL…FKKN), and 212–292 (KPHF…FRET). The next 6 helical transmembrane spans lie at 18–38 (ASTF…GYPL), 72–91 (GLTL…FTVY), 107–127 (YFIS…PFEY), 184–204 (HLTR…TFKK), 215–235 (FAYA…VFPV), and 264–285 (IYRG…NFTL).

The protein belongs to the mitochondrial carrier (TC 2.A.29) family.

The protein localises to the mitochondrion inner membrane. Required for arginine biosynthesis. Transports ornithine synthesized from glutamate in the mitochondrial matrix to the cytosol, where it is converted to arginine. In Schizosaccharomyces pombe (strain 972 / ATCC 24843) (Fission yeast), this protein is Mitochondrial ornithine transporter 1.